Here is a 304-residue protein sequence, read N- to C-terminus: Glycine--tRNA ligase alpha subunit (304 aa).

The protein belongs to the class-II aminoacyl-tRNA synthetase family. In terms of assembly, tetramer of two alpha and two beta subunits.

It localises to the cytoplasm. It carries out the reaction tRNA(Gly) + glycine + ATP = glycyl-tRNA(Gly) + AMP + diphosphate. The polypeptide is Glycine--tRNA ligase alpha subunit (Streptococcus agalactiae serotype Ia (strain ATCC 27591 / A909 / CDC SS700)).